A 164-amino-acid polypeptide reads, in one-letter code: Peptide deformylase (164 aa).

Cys87 and His129 together coordinate Fe cation. The active site involves Glu130. His133 is a Fe cation binding site.

Belongs to the polypeptide deformylase family. Requires Fe(2+) as cofactor.

The catalysed reaction is N-terminal N-formyl-L-methionyl-[peptide] + H2O = N-terminal L-methionyl-[peptide] + formate. Functionally, removes the formyl group from the N-terminal Met of newly synthesized proteins. Requires at least a dipeptide for an efficient rate of reaction. N-terminal L-methionine is a prerequisite for activity but the enzyme has broad specificity at other positions. This chain is Peptide deformylase, found in Thermotoga neapolitana (strain ATCC 49049 / DSM 4359 / NBRC 107923 / NS-E).